The chain runs to 97 residues: MKKRSSRKLAQVIGRKTGNYFPASIEGETKKEHKHHYSTASKEKESLRKRAKEFDVLVHSLLDKHVPQNSDQVLIFTYQNGFVETDFHNFGRYSVKL.

Residues 24–45 (SIEGETKKEHKHHYSTASKEKE) are disordered.

The protein is Late transcription unit B protein (ltuB) of Chlamydia trachomatis serovar D (strain ATCC VR-885 / DSM 19411 / UW-3/Cx).